Here is a 217-residue protein sequence, read N- to C-terminus: MIYMASGTHYESWSALPLFDRVASPDHAKDFVPDLNDYESPTFEVDLLSENYDYDNFLTYSLPTVDPTKTLLHEEPLCFEGDFTNPAIDHYITTSSGLLDAVPSQLIALPSFTQPSKCPFPNCKSTTIFESGRDFRRHYRQHFKRFFCRYPDCSQSTQDIMEVGTKGFATRKDRARHESKHKPTVRCPWHDQEGQQCLRVFSRVDNMRDHYRRIHKC.

The segment at 185–215 (VRCPWHDQEGQQCLRVFSRVDNMRDHYRRIH) adopts a C2H2-type zinc-finger fold.

It is found in the nucleus. In terms of biological role, transcriptional activator of part of the core trichothecene biosynthesis cluster. This Fusarium sporotrichioides protein is Trichothecene biosynthesis transcription regulator TRI6.